A 253-amino-acid polypeptide reads, in one-letter code: 5'/3'-nucleotidase SurE (253 aa).

A divalent metal cation-binding residues include Asp-8, Asp-9, Ser-39, and Asn-92.

It belongs to the SurE nucleotidase family. A divalent metal cation is required as a cofactor.

It is found in the cytoplasm. The enzyme catalyses a ribonucleoside 5'-phosphate + H2O = a ribonucleoside + phosphate. The catalysed reaction is a ribonucleoside 3'-phosphate + H2O = a ribonucleoside + phosphate. It catalyses the reaction [phosphate](n) + H2O = [phosphate](n-1) + phosphate + H(+). In terms of biological role, nucleotidase with a broad substrate specificity as it can dephosphorylate various ribo- and deoxyribonucleoside 5'-monophosphates and ribonucleoside 3'-monophosphates with highest affinity to 3'-AMP. Also hydrolyzes polyphosphate (exopolyphosphatase activity) with the preference for short-chain-length substrates (P20-25). Might be involved in the regulation of dNTP and NTP pools, and in the turnover of 3'-mononucleotides produced by numerous intracellular RNases (T1, T2, and F) during the degradation of various RNAs. The protein is 5'/3'-nucleotidase SurE of Serratia proteamaculans (strain 568).